The primary structure comprises 341 residues: Ribose-phosphate pyrophosphokinase 5 (341 aa).

Mg(2+)-binding residues include Asp152, His154, and Asp167.

It belongs to the ribose-phosphate pyrophosphokinase family.

The protein localises to the cytoplasm. The enzyme catalyses D-ribose 5-phosphate + ATP = 5-phospho-alpha-D-ribose 1-diphosphate + AMP + H(+). It functions in the pathway metabolic intermediate biosynthesis; 5-phospho-alpha-D-ribose 1-diphosphate biosynthesis; 5-phospho-alpha-D-ribose 1-diphosphate from D-ribose 5-phosphate (route I): step 1/1. Functionally, 5-phosphoribose 1-diphosphate synthase involved in nucleotide, histidine, and tryptophan biosynthesis. Active in heteromultimeric complexes with other 5-phosphoribose 1-diphosphate synthases. This chain is Ribose-phosphate pyrophosphokinase 5, found in Schizosaccharomyces pombe (strain 972 / ATCC 24843) (Fission yeast).